A 381-amino-acid chain; its full sequence is Opsin Rh2 (381 aa).

Topologically, residues 1 to 56 (MERSHLPETPFDLAHSGPRFQAQSSGNGSVLDNVLPDMAHLVNPYWSRFAPMDPMM) are extracellular. N-linked (GlcNAc...) asparagine glycosylation is present at asparagine 27. Residues 57–81 (SKILGLFTLAIMIISCCGNGVVVYI) form a helical membrane-spanning segment. The Cytoplasmic portion of the chain corresponds to 82 to 93 (FGGTKSLRTPAN). Residues 94–119 (LLVLNLAFSDFCMMASQSPVMIINFY) form a helical membrane-spanning segment. Residues 120–133 (YETWVLGPLWCDIY) are Extracellular-facing. Cysteine 130 and cysteine 207 are oxidised to a cystine. A helical membrane pass occupies residues 134-153 (AGCGSLFGCVSIWSMCMIAF). The Cytoplasmic segment spans residues 154-172 (DRYNVIVKGINGTPMTIKT). The chain crosses the membrane as a helical span at residues 173-196 (SIMKILFIWMMAVFWTVMPLIGWS). At 197–220 (AYVPEGNLTACSIDYMTRMWNPRS) the chain is on the extracellular side. A helical membrane pass occupies residues 221–248 (YLITYSLFVYYTPLFLICYSYWFIIAAV). The Cytoplasmic portion of the chain corresponds to 249-283 (AAHEKAMREQAKKMNVKSLRSSEDCDKSAEGKLAK). A helical transmembrane segment spans residues 284–307 (VALTTISLWFMAWTPYLVICYFGL). At 308-314 (FKIDGLT) the chain is on the extracellular side. The chain crosses the membrane as a helical span at residues 315 to 339 (PLTTIWGATFAKTSAVYNPIVYGIS). Lysine 326 bears the N6-(retinylidene)lysine mark. Over 340–381 (HPKYRIVLKEKCPMCVFGNTDEPKPDAPASDTETTSEADSKA) the chain is Cytoplasmic. Positions 359–381 (TDEPKPDAPASDTETTSEADSKA) are disordered. A compositionally biased stretch (polar residues) spans 370 to 381 (DTETTSEADSKA).

This sequence belongs to the G-protein coupled receptor 1 family. Opsin subfamily. Post-translationally, phosphorylated on some or all of the serine and threonine residues present in the C-terminal region. As to expression, predominant opsin expressed in the dorsal ocelli.

The protein localises to the membrane. Its function is as follows. Visual pigments are the light-absorbing molecules that mediate vision. They consist of an apoprotein, opsin, covalently linked to cis-retinal. The polypeptide is Opsin Rh2 (Rh2) (Drosophila melanogaster (Fruit fly)).